We begin with the raw amino-acid sequence, 1218 residues long: ABC transporter NFT1 (1218 aa).

Topologically, residues 1–29 (MIKNGTCPYWERDDLSECARREYIEFKFP) are extracellular. N-linked (GlcNAc...) asparagine glycosylation is present at Asn4. Residues 30-50 (LFILLTGMIYAFCKVFRAFYL) traverse the membrane as a helical segment. Residues 51-103 (RGKNHTNEAPEFEEQGNGNHEYARFSVLRLKSAWESRSFCNVNNRSTFDKFKK) lie on the Cytoplasmic side of the membrane. Residues 104–124 (FIEGAFIVLQLTIHLYILSSM) traverse the membrane as a helical segment. The Extracellular portion of the chain corresponds to 125–130 (PMDNKK). A helical membrane pass occupies residues 131 to 151 (FFHQGFLVQMFLWILLLVVIT). Residues 152-169 (LRLISASQSFRWVLACKR) lie on the Cytoplasmic side of the membrane. The helical transmembrane segment at 170–190 (DLWAVSFYSYASLFTLSILPL) threads the bilayer. Residues 191–201 (RSVFIGKIKDK) are Extracellular-facing. The helical transmembrane segment at 202–222 (IMVKYIISETFIDLALLLLLS) threads the bilayer. Over 223-302 (TSSIEGTRYS…SSKKGRLLPN (80 aa)) the chain is Cytoplasmic. A helical membrane pass occupies residues 303–323 (IICYFKAVFISQLFLAFVSSF). One can recognise an ABC transmembrane type-1 1 domain in the interval 311–621 (FISQLFLAFV…IASTVSLLIQ (311 aa)). Residues 324-351 (LNFVPSLLMPRILSYVNDPKSKSWNLVS) are Extracellular-facing. The helical transmembrane segment at 352–374 (LYVSSMLVSKIIATTCRGQGLFL) threads the bilayer. The Cytoplasmic portion of the chain corresponds to 375 to 449 (GEKGTMQLRT…VMSIDAFKVS (75 aa)). The disordered stretch occupies residues 410–434 (NASTSFEENPDSSEAEPRKKSSRKD). Residues 424–434 (AEPRKKSSRKD) show a composition bias toward basic and acidic residues. Residues 450 to 470 (EAMNTFYLACEAVFMTVTALM) form a helical membrane-spanning segment. Topologically, residues 471–481 (ILYSLLGWSAF) are extracellular. Residues 482 to 504 (AGTFALLAMIPLNFWCATFYGNY) form a helical membrane-spanning segment. The Cytoplasmic portion of the chain corresponds to 505–558 (QADQLILTDKRTSGISEALNSIRVIKLLAWENLFYQKIINVRDGEIRLLKKKAT). Residues 559–579 (IFFLNHLIWFFGPTLVSAITF) form a helical membrane-spanning segment. The Extracellular segment spans residues 580 to 584 (SVFIK). The helical transmembrane segment at 585-605 (FQNQTLTPTIAFTALSLFAIL) threads the bilayer. The Cytoplasmic segment spans residues 606–953 (RTPMDQIAST…KFSAYKWLAD (348 aa)). Positions 651-892 (FGFEDASMEW…NEFLRESINN (242 aa)) constitute an ABC transporter domain. 686–693 (GPTGSGKS) is an ATP binding site. The span at 892–901 (NDSKNTTHNQ) shows a compositional bias: polar residues. Residues 892-926 (NDSKNTTHNQIDLKRSTTSKKTKNGDPEGGNSQDE) form a disordered region. Residues 954-974 (YFGGLGVVFVFTSSSILIHGI) form a helical membrane-spanning segment. The 258-residue stretch at 961–1218 (VFVFTSSSIL…SSVMIIMKAS (258 aa)) folds into the ABC transmembrane type-1 2 domain. Over 975–1013 (TLSQGFWLRYWLDTGSSGSKSTWLYRIVEGHSNIYFLLT) the chain is Extracellular. The helical transmembrane segment at 1014–1034 (YIIIGLVSSFLTSGKVWIAII) threads the bilayer. Residues 1035 to 1082 (SGTNVTKKIFAKLLSSILYAKLRFHNVTPTGRIMNRFSKDMDIIDQQL) are Cytoplasmic-facing. A helical transmembrane segment spans residues 1083-1105 (IPNFEGLSYSVVVCLWIILLIGY). The Extracellular portion of the chain corresponds to 1106–1109 (VTPQ). A helical transmembrane segment spans residues 1110–1132 (FLLFAIPLCALYYTVCTLYLRAS). Residues 1133–1197 (RELKRIDNIN…NMATEWITYR (65 aa)) are Cytoplasmic-facing. A helical membrane pass occupies residues 1198-1218 (VDIIGTLVLFSSSVMIIMKAS).

Belongs to the ABC transporter superfamily. ABCC family. Conjugate transporter (TC 3.A.1.208) subfamily.

Its subcellular location is the membrane. This chain is ABC transporter NFT1 (NFT1), found in Saccharomyces cerevisiae (strain ATCC 204508 / S288c) (Baker's yeast).